An 869-amino-acid chain; its full sequence is Bifunctional uridylyltransferase/uridylyl-removing enzyme (869 aa).

The segment at methionine 1–serine 332 is uridylyltransferase. The segment at leucine 333 to leucine 691 is uridylyl-removing. The region spanning valine 450–leucine 572 is the HD domain. 2 consecutive ACT domains span residues glutamate 692–proline 774 and arginine 798–valine 869.

This sequence belongs to the GlnD family. Mg(2+) serves as cofactor.

It carries out the reaction [protein-PII]-L-tyrosine + UTP = [protein-PII]-uridylyl-L-tyrosine + diphosphate. The enzyme catalyses [protein-PII]-uridylyl-L-tyrosine + H2O = [protein-PII]-L-tyrosine + UMP + H(+). Uridylyltransferase (UTase) activity is inhibited by glutamine, while glutamine activates uridylyl-removing (UR) activity. In terms of biological role, modifies, by uridylylation and deuridylylation, the PII regulatory proteins (GlnB and homologs), in response to the nitrogen status of the cell that GlnD senses through the glutamine level. Under low glutamine levels, catalyzes the conversion of the PII proteins and UTP to PII-UMP and PPi, while under higher glutamine levels, GlnD hydrolyzes PII-UMP to PII and UMP (deuridylylation). Thus, controls uridylylation state and activity of the PII proteins, and plays an important role in the regulation of nitrogen assimilation and metabolism. The sequence is that of Bifunctional uridylyltransferase/uridylyl-removing enzyme from Xanthomonas oryzae pv. oryzae (strain MAFF 311018).